Reading from the N-terminus, the 169-residue chain is S-ribosylhomocysteine lyase (169 aa).

The Fe cation site is built by histidine 54, histidine 58, and cysteine 128.

The protein belongs to the LuxS family. As to quaternary structure, homodimer. It depends on Fe cation as a cofactor.

The catalysed reaction is S-(5-deoxy-D-ribos-5-yl)-L-homocysteine = (S)-4,5-dihydroxypentane-2,3-dione + L-homocysteine. In terms of biological role, involved in the synthesis of autoinducer 2 (AI-2) which is secreted by bacteria and is used to communicate both the cell density and the metabolic potential of the environment. The regulation of gene expression in response to changes in cell density is called quorum sensing. Catalyzes the transformation of S-ribosylhomocysteine (RHC) to homocysteine (HC) and 4,5-dihydroxy-2,3-pentadione (DPD). The chain is S-ribosylhomocysteine lyase from Shewanella halifaxensis (strain HAW-EB4).